We begin with the raw amino-acid sequence, 222 residues long: uncharacterized protein (222 aa).

N-linked (GlcNAc...) asparagine; by host glycans are attached at residues Asn4, Asn75, Asn84, Asn104, Asn170, and Asn175. A helical transmembrane segment spans residues 200–220 (LIIIIGIVIILLLIIVMIKTV).

It localises to the membrane. This is an uncharacterized protein from Acanthamoeba polyphaga (Amoeba).